A 349-amino-acid polypeptide reads, in one-letter code: Divinyl chlorophyll a/b light-harvesting protein PcbE (349 aa).

The next 6 helical transmembrane spans lie at F27–L47, I65–G85, V88–L108, V201–A221, A241–C261, and L308–L328.

This sequence belongs to the PsbB/PsbC family. IsiA/Pcb subfamily. The antenna complex consists of divinyl chlorophylls (a and b) and divinyl chlorophyll a/b binding proteins and binds more divinyl chlorophyll b than does the antenna complex from high-light-adapted Prochlorococcus. Requires divinyl chlorophyll a as cofactor. Divinyl chlorophyll b serves as cofactor.

The protein resides in the cellular thylakoid membrane. The antenna complex functions as a light receptor, it captures and delivers excitation energy to photosystems II and I. The Prochlorales pcb genes are not related to higher plant LHCs. This Prochlorococcus marinus (strain NATL2A) protein is Divinyl chlorophyll a/b light-harvesting protein PcbE (pcbE).